A 347-amino-acid polypeptide reads, in one-letter code: Protein-glutamate methylesterase/protein-glutamine glutaminase (347 aa).

The 117-residue stretch at 3-119 folds into the Response regulatory domain; sequence EALVVDDSHF…STELSGHSEE (117 aa). A 4-aspartylphosphate modification is found at Asp53. The tract at residues 132–154 is disordered; it reads PTAGHDVEMEPASPPDATTSEYA. The region spanning 152–346 is the CheB-type methylesterase domain; that stretch reads EYADNPTLLI…EAIADSIRRT (195 aa). Active-site residues include Ser164, His191, and Asp288.

It belongs to the CheB family. In terms of processing, phosphorylated by CheA. Phosphorylation of the N-terminal regulatory domain activates the methylesterase activity.

It localises to the cytoplasm. It carries out the reaction [protein]-L-glutamate 5-O-methyl ester + H2O = L-glutamyl-[protein] + methanol + H(+). It catalyses the reaction L-glutaminyl-[protein] + H2O = L-glutamyl-[protein] + NH4(+). Involved in the modulation of the chemotaxis system; catalyzes the demethylation of specific methylglutamate residues introduced into the Htr transducer proteins (methyl-accepting chemotaxis proteins) by CheR. Also required for Htr deamidations, at least at a specific glutamine-glutamate pair in HTR-II and a specific aspartate-glutamine pair in Htr4. The sequence is that of Protein-glutamate methylesterase/protein-glutamine glutaminase from Halobacterium salinarum (strain ATCC 29341 / DSM 671 / R1).